A 168-amino-acid chain; its full sequence is Lipoprotein signal peptidase (168 aa).

The next 3 helical transmembrane spans lie at 6-26 (VLAA…DQIT), 70-90 (WFLA…IAKL), and 98-118 (ALAL…RMLL). Catalysis depends on residues D123 and D141. Residues 139 to 159 (IADSAICIGAALLVWDSLFGT) form a helical membrane-spanning segment.

The protein belongs to the peptidase A8 family.

The protein resides in the cell inner membrane. It carries out the reaction Release of signal peptides from bacterial membrane prolipoproteins. Hydrolyzes -Xaa-Yaa-Zaa-|-(S,diacylglyceryl)Cys-, in which Xaa is hydrophobic (preferably Leu), and Yaa (Ala or Ser) and Zaa (Gly or Ala) have small, neutral side chains.. Its pathway is protein modification; lipoprotein biosynthesis (signal peptide cleavage). Its function is as follows. This protein specifically catalyzes the removal of signal peptides from prolipoproteins. The sequence is that of Lipoprotein signal peptidase from Teredinibacter turnerae (strain ATCC 39867 / T7901).